Reading from the N-terminus, the 476-residue chain is Ribosomal RNA small subunit methyltransferase F (476 aa).

S-adenosyl-L-methionine-binding positions include 125-131 (AAAPGSK), Glu-149, Asp-176, and Asp-194. Cys-247 functions as the Nucleophile in the catalytic mechanism.

Belongs to the class I-like SAM-binding methyltransferase superfamily. RsmB/NOP family.

It is found in the cytoplasm. The enzyme catalyses cytidine(1407) in 16S rRNA + S-adenosyl-L-methionine = 5-methylcytidine(1407) in 16S rRNA + S-adenosyl-L-homocysteine + H(+). In terms of biological role, specifically methylates the cytosine at position 1407 (m5C1407) of 16S rRNA. The chain is Ribosomal RNA small subunit methyltransferase F from Aeromonas salmonicida (strain A449).